The following is a 358-amino-acid chain: Protein-arginine kinase (358 aa).

The 232-residue stretch at 24–255 folds into the Phosphagen kinase C-terminal domain; sequence IVLSSRIRLA…KQLIRQERVA (232 aa). Residues 27 to 31, His92, Arg126, 177 to 181, and 208 to 213 contribute to the ATP site; these read SSRIR, RASVM, and RGIYGE. The short motif at 338-343 is the RDXXRA motif of the pArg binding pocket involved in allosteric regulation element; sequence RDERRA.

This sequence belongs to the ATP:guanido phosphotransferase family.

It carries out the reaction L-arginyl-[protein] + ATP = N(omega)-phospho-L-arginyl-[protein] + ADP + H(+). Appears to be allosterically activated by the binding of pArg-containing polypeptides to the pArg-binding pocket localized in the C-terminal domain of McsB. Functionally, catalyzes the specific phosphorylation of arginine residues in a large number of proteins. Is part of the bacterial stress response system. Protein arginine phosphorylation has a physiologically important role and is involved in the regulation of many critical cellular processes, such as protein homeostasis, motility, competence, and stringent and stress responses, by regulating gene expression and protein activity. The protein is Protein-arginine kinase of Shouchella clausii (strain KSM-K16) (Alkalihalobacillus clausii).